The primary structure comprises 775 residues: MEQVEILRRFIQRVQAMKSPDHNGEDNFARDFMRLRRLSTKYRTEKIYPTATGEKEENVKKNRYKDILPFDHSRVKLTLKTPSQDSDYINANFIKGVYGPKAYVATQGPLANTVIDFWRMIWEYNVVIIVMACREFEMGRKKCERYWPLYGEDPITFAPFKISCENEQARTDYFIRTLLLEFQNESRRLYQFHYVNWPDHDVPSSFDSILDMISLMRKYQEHEDVPICIHCSAGCGRTGAICAIDYTWNLLKAGKIPEEFNVFNLIQEMRTQRHSAVQTKEQYELVHRAIAQLFEKQLQLYEIHGAQKIADGNEITTGTMVSSIDSEKQDSPPPKPPRTRSCLVEGDAKEEILQPPEPHPVPPILTPSPPSAFPTVTTVWQDSDRYHPKPVLHMASPEQHPADLNRSYDKSADPMGKSESAIEHIDKKLERNLSFEIKKVPLQEGPKSFDGNTLLNRGHAIKIKSASSSVVDRTSKPQELSAGALKVDDVSQNSCADCSAAHSHRAAESSEESQSNSHTPPRPDCLPLDKKGHVTWSLHGPENATPVPDSPDGKSPDNHSQTLKTVSSTPNSTAEEEAHDLTEHHNSSPLLKAPLSFTNPLHSDDSDSDGGSSDGAVTRNKTSISTASATVSPASSAESACTRRVLPMSIARQEVAGTPHSGAEKDADVSEESPPPLPERTPESFVLADMPVRPEWHELPNQEWSEQRESEGLTTSGNEKHDAGGIHTEASADSPPAFSDKKDQITKSPAEVTDIGFGNRCGKPKGPREPPSEWT.

At methionine 1 the chain carries N-acetylmethionine. At serine 19 the chain carries Phosphoserine. The 266-residue stretch at 28 to 293 (FARDFMRLRR…ELVHRAIAQL (266 aa)) folds into the Tyrosine-protein phosphatase domain. Substrate-binding positions include aspartate 199, 231 to 237 (CSAGCGR), and glutamine 278. The Phosphocysteine intermediate role is filled by cysteine 231. A disordered region spans residues 322–341 (SSIDSEKQDSPPPKPPRTRS). Phosphoserine is present on residues serine 331, serine 434, serine 448, and serine 467. The interval 344-437 (VEGDAKEEIL…KLERNLSFEI (94 aa)) is interaction with TGFB1I1. Positions 462–775 (KIKSASSSVV…GPREPPSEWT (314 aa)) are disordered. A Phosphothreonine modification is found at threonine 519. 2 positions are modified to phosphoserine: serine 550 and serine 567. Over residues 558-573 (NHSQTLKTVSSTPNST) the composition is skewed to polar residues. A Phosphothreonine modification is found at threonine 569. Serine 596 carries the phosphoserine modification. Threonine 598 is modified (phosphothreonine). A phosphoserine mark is found at serine 603, serine 606, serine 608, and serine 613. The span at 622–640 (TSISTASATVSPASSAESA) shows a compositional bias: low complexity. Serine 673 carries the post-translational modification Phosphoserine. Basic and acidic residues predominate over residues 692 to 711 (VRPEWHELPNQEWSEQRESE). Serine 748 is modified (phosphoserine). A compositionally biased stretch (basic and acidic residues) spans 766-775 (GPREPPSEWT).

This sequence belongs to the protein-tyrosine phosphatase family. Non-receptor class 4 subfamily. In terms of assembly, interacts with PSTPIP1 and TGFB1I1. Interacts with PTK2B/PYK2. Interacts with LPXN. Interacts with SORBS2; this interaction greatly enhances WASF1 dephosphorylation and might mediate partial translocation to focal adhesion sites. In terms of processing, phosphorylated by STK24/MST3 and this results in inhibition of its activity.

It localises to the cytoplasm. It is found in the cell junction. Its subcellular location is the focal adhesion. The protein resides in the cell projection. The protein localises to the podosome. The enzyme catalyses O-phospho-L-tyrosyl-[protein] + H2O = L-tyrosyl-[protein] + phosphate. Functionally, dephosphorylates a range of proteins, and thereby regulates cellular signaling cascades. Dephosphorylates cellular tyrosine kinases, such as ERBB2 and PTK2B/PYK2, and thereby regulates signaling via ERBB2 and PTK2B/PYK2. Selectively dephosphorylates ERBB2 phosphorylated at 'Tyr-1112', 'Tyr-1196', and/or 'Tyr-1248'. In Mus musculus (Mouse), this protein is Tyrosine-protein phosphatase non-receptor type 12 (Ptpn12).